Consider the following 167-residue polypeptide: Leukotoxin-activating lysine-acyltransferase LktC serotype A11 (167 aa).

Residues histidine 22 and aspartate 91 contribute to the active site.

This sequence belongs to the RTX toxin acyltransferase family.

The protein localises to the cytoplasm. It carries out the reaction a fatty acyl-[ACP] + L-lysyl-[protein] = N(6)-(fatty acyl)-L-lysyl-[protein] + holo-[ACP] + H(+). Involved in fatty acylation of the protoxin (LktA) at two internal lysine residues, thereby converting it to the active toxin. This is Leukotoxin-activating lysine-acyltransferase LktC serotype A11 (lktC) from Mannheimia haemolytica (Pasteurella haemolytica).